The sequence spans 272 residues: Undecaprenyl-diphosphatase (272 aa).

7 helical membrane passes run 2–22 (FDII…FLPI), 43–63 (FISM…VLLY), 82–102 (WQLW…GLPL), 110–130 (LHTP…FIIL), 185–205 (YVAT…VLII), 224–244 (VLMT…KWLL), and 252–272 (FKPF…VMFI).

This sequence belongs to the UppP family.

Its subcellular location is the cell membrane. It carries out the reaction di-trans,octa-cis-undecaprenyl diphosphate + H2O = di-trans,octa-cis-undecaprenyl phosphate + phosphate + H(+). Functionally, catalyzes the dephosphorylation of undecaprenyl diphosphate (UPP). Confers resistance to bacitracin. The sequence is that of Undecaprenyl-diphosphatase from Lacticaseibacillus casei (strain BL23) (Lactobacillus casei).